The chain runs to 279 residues: 3-methyl-2-oxobutanoate hydroxymethyltransferase (279 aa).

Residues Asp-53 and Asp-92 each coordinate Mg(2+). Residues 53 to 54 (DS), Asp-92, and Lys-122 each bind 3-methyl-2-oxobutanoate. Glu-124 lines the Mg(2+) pocket. Glu-191 functions as the Proton acceptor in the catalytic mechanism.

It belongs to the PanB family. In terms of assembly, homodecamer; pentamer of dimers. Mg(2+) serves as cofactor.

The protein localises to the cytoplasm. The enzyme catalyses 3-methyl-2-oxobutanoate + (6R)-5,10-methylene-5,6,7,8-tetrahydrofolate + H2O = 2-dehydropantoate + (6S)-5,6,7,8-tetrahydrofolate. It participates in cofactor biosynthesis; (R)-pantothenate biosynthesis; (R)-pantoate from 3-methyl-2-oxobutanoate: step 1/2. In terms of biological role, catalyzes the reversible reaction in which hydroxymethyl group from 5,10-methylenetetrahydrofolate is transferred onto alpha-ketoisovalerate to form ketopantoate. The sequence is that of 3-methyl-2-oxobutanoate hydroxymethyltransferase from Maricaulis maris (strain MCS10) (Caulobacter maris).